A 1080-amino-acid polypeptide reads, in one-letter code: DNA-directed RNA polymerase subunit beta (1080 aa).

The protein belongs to the RNA polymerase beta chain family. In terms of assembly, in plastids the minimal PEP RNA polymerase catalytic core is composed of four subunits: alpha, beta, beta', and beta''. When a (nuclear-encoded) sigma factor is associated with the core the holoenzyme is formed, which can initiate transcription.

The protein localises to the plastid. Its subcellular location is the chloroplast. The catalysed reaction is RNA(n) + a ribonucleoside 5'-triphosphate = RNA(n+1) + diphosphate. In terms of biological role, DNA-dependent RNA polymerase catalyzes the transcription of DNA into RNA using the four ribonucleoside triphosphates as substrates. This Mesostigma viride (Green alga) protein is DNA-directed RNA polymerase subunit beta.